The sequence spans 143 residues: MAKKIIGYIKLQVPAGKANPSPPIGPALGQRGLNIMEFCKAFNAKTQGLEPGLPIPVVITAFADKSFTFIMKTPPATILIKKAAGIQKGSPKPHTDKVGSISRAQVEEIAKTKMPDLTAADMEAAVRTIAGSARSMGITVEGL.

The protein belongs to the universal ribosomal protein uL11 family. Part of the ribosomal stalk of the 50S ribosomal subunit. Interacts with L10 and the large rRNA to form the base of the stalk. L10 forms an elongated spine to which L12 dimers bind in a sequential fashion forming a multimeric L10(L12)X complex. One or more lysine residues are methylated.

Its function is as follows. Forms part of the ribosomal stalk which helps the ribosome interact with GTP-bound translation factors. This Azoarcus sp. (strain BH72) protein is Large ribosomal subunit protein uL11.